We begin with the raw amino-acid sequence, 145 residues long: Basic phospholipase A2 PC14 (145 aa).

The N-terminal stretch at 1 to 21 (MYPAHLLLLLAVCVSLLGASA) is a signal peptide. Positions 22 to 27 (IPPLPL) are excised as a propeptide. Cystine bridges form between Cys-38–Cys-98, Cys-54–Cys-144, Cys-56–Cys-72, Cys-71–Cys-125, Cys-78–Cys-118, Cys-87–Cys-111, and Cys-105–Cys-116. Residues Tyr-55, Gly-57, and Gly-59 each coordinate Ca(2+). Residue His-75 is part of the active site. Ca(2+) is bound at residue Asp-76. Asp-119 is an active-site residue.

This sequence belongs to the phospholipase A2 family. Group I subfamily. D49 sub-subfamily. It depends on Ca(2+) as a cofactor.

The protein resides in the secreted. It carries out the reaction a 1,2-diacyl-sn-glycero-3-phosphocholine + H2O = a 1-acyl-sn-glycero-3-phosphocholine + a fatty acid + H(+). PLA2 catalyzes the calcium-dependent hydrolysis of the 2-acyl groups in 3-sn-phosphoglycerides. In Laticauda laticaudata (Blue-ringed sea krait), this protein is Basic phospholipase A2 PC14.